Here is a 1020-residue protein sequence, read N- to C-terminus: UPF0182 protein jk1603 (1020 aa).

A compositionally biased stretch (pro residues) spans 1–18; it reads MSTPTPPSSGRPKQPFPS. A disordered region spans residues 1 to 23; sequence MSTPTPPSSGRPKQPFPSSPGSS. Helical transmembrane passes span 28-48, 73-93, 125-145, 175-195, 227-247, 272-292, and 300-320; these read ILGILVAIIAIAIFIVPVVVS, LVLFVVFGLIGALISWLAAFL, FLVGIPLFVGVITGMIVQSNW, LPFLQMLVSTFSVLLILAFVI, LAVIAGVWMLLKAVGYWFDRY, QIVLLVISIFVAAMFFVTIVL, and LAVALMVGSSLTVGLAWPAML. A disordered region spans residues 924–998; that stretch reads QEIDGSVVDP…KVNKTRESGT (75 aa). Composition is skewed to basic and acidic residues over residues 942-961 and 969-998; these read KGDKGKDADKDKKSKDEQSS and KSDDKGTDTAPEQRVRDAMDKVNKTRESGT.

This sequence belongs to the UPF0182 family.

It is found in the cell membrane. The protein is UPF0182 protein jk1603 of Corynebacterium jeikeium (strain K411).